Here is a 589-residue protein sequence, read N- to C-terminus: Enhancer of polycomb-like protein 1 (589 aa).

Disordered regions lie at residues 298–339 (GDED…RPAE), 403–430 (MTPPASASSGSMDEPTPMDLDKPKPNPP), 468–497 (LPSPARDLSEEQSDRWKYDQSSDDEDDAPV), and 516–589 (LQTV…QPVS). A compositionally biased stretch (basic and acidic residues) spans 474-487 (DLSEEQSDRWKYDQ). A compositionally biased stretch (low complexity) spans 557–566 (PQPNQSQSLP). Positions 567-589 (LPQPQQPVAQPQPQPQPQAQPVS) are enriched in pro residues.

Belongs to the enhancer of polycomb family. Component of the NuA4 histone acetyltransferase complex.

It localises to the nucleus. Its function is as follows. Component of the NuA4 histone acetyltransferase complex which is involved in transcriptional activation of selected genes principally by acetylation of nucleosomal histone H4 and H2A. The NuA4 complex is also involved in DNA repair. Involved in gene silencing by neighboring heterochromatin, blockage of the silencing spreading along the chromosome, and required for cell cycle progression through G2/M. The protein is Enhancer of polycomb-like protein 1 (epl-1) of Neurospora crassa (strain ATCC 24698 / 74-OR23-1A / CBS 708.71 / DSM 1257 / FGSC 987).